The sequence spans 227 residues: GTP:AMP phosphotransferase AK3, mitochondrial (227 aa).

5 residues coordinate GTP: Gly-17, Gly-19, Lys-20, Gly-21, and Thr-22. The residue at position 20 (Lys-20) is an N6-succinyllysine. Lys-34 is modified (N6-acetyllysine). Ser-37 is modified (phosphoserine). Residues 37 to 66 (SSGDLLRDNMLRGTEIGVLAKAFIDQGKLI) are NMP. The AMP site is built by Ser-38 and Arg-43. An N6-succinyllysine modification is found at Lys-57. Residue Lys-64 coordinates AMP. An N6-acetyllysine; alternate mark is found at Lys-64 and Lys-80. Lys-64 and Lys-80 each carry N6-succinyllysine; alternate. Positions 91, 94, and 98 each coordinate AMP. Residues 127 to 164 (ARWIHPASGRVYNIEFNPPKTVGIDDLTGEPLIQREDD) form an LID region. GTP contacts are provided by Arg-128, Tyr-138, Asn-139, Arg-161, and Arg-172. Lys-174 and Lys-189 each carry N6-acetyllysine; alternate. Residues Lys-174 and Lys-189 each carry the N6-succinyllysine; alternate modification. Thr-201 provides a ligand contact to GTP. Lys-203 is subject to N6-acetyllysine.

This sequence belongs to the adenylate kinase family. AK3 subfamily. In terms of assembly, monomer. In terms of tissue distribution, highly expressed in heart, skeletal muscle and liver, moderately expressed in pancreas and kidney, and weakly expressed in placenta, brain and lung.

The protein localises to the mitochondrion matrix. The enzyme catalyses a ribonucleoside 5'-triphosphate + AMP = a ribonucleoside 5'-diphosphate + ADP. The catalysed reaction is GTP + AMP = GDP + ADP. It catalyses the reaction ITP + AMP = IDP + ADP. Its activity is regulated as follows. Inhibited by ATP. Functionally, mitochondrial adenylate kinase with a specific GTP:AMP phosphotransferase activity. Could also use ITP as phosphate donor. Its physiological function is to recycle GTP into GDP which is necessary for the TCA cycle in the mitochondrial matrix. The protein is GTP:AMP phosphotransferase AK3, mitochondrial of Homo sapiens (Human).